The sequence spans 212 residues: Eukaryotic translation initiation factor 4E-1 (212 aa).

The cysteines at positions 125 and 129 are disulfide-linked.

This sequence belongs to the eukaryotic initiation factor 4E family. In terms of assembly, EIF4F is a multi-subunit complex, the composition of which varies with external and internal environmental conditions. It is composed of at least EIF4A, EIF4E and EIF4G. EIF4E is also known to interact with other partners, including pgl-1. Interacts with ifet-1. In terms of tissue distribution, enriched in the germline from L3 larvae to adults; regions of the gonad undergoing spermatogenesis. Expressed in germ granules (P granules); when associated with pgl-1.

Its subcellular location is the cytoplasm. Functionally, recognizes and binds the 7-methylguanosine-containing mRNA cap during an early step in the initiation of protein synthesis and facilitates ribosome binding by inducing the unwinding of the mRNAs secondary structures. All 5 eIF4E proteins bind monomethyl cap structures. Only ife-1, ife-2 and ife-5 bind trimethyl cap structures which result from trans-splicing. Translation of trimethyl cap structure mRNAs may be regulated by intracellular redox state; disulfide bonds change the width and depth of the cap-binding cavity determining selectivity to mRNA caps. Required for progression through meiotic divisions during spermatogenesis and for the production of viable sperm. It is not required during oogenesis. The sequence is that of Eukaryotic translation initiation factor 4E-1 (ife-1) from Caenorhabditis elegans.